Here is a 234-residue protein sequence, read N- to C-terminus: Endonuclease V (234 aa).

Residues D36 and D104 each contribute to the Mg(2+) site.

The protein belongs to the endonuclease V family. It depends on Mg(2+) as a cofactor.

The protein localises to the cytoplasm. It catalyses the reaction Endonucleolytic cleavage at apurinic or apyrimidinic sites to products with a 5'-phosphate.. Its function is as follows. DNA repair enzyme involved in the repair of deaminated bases. Selectively cleaves double-stranded DNA at the second phosphodiester bond 3' to a deoxyinosine leaving behind the intact lesion on the nicked DNA. This is Endonuclease V from Yersinia enterocolitica serotype O:8 / biotype 1B (strain NCTC 13174 / 8081).